A 401-amino-acid chain; its full sequence is Argininosuccinate synthase (401 aa).

9–17 (AYSGGLDTS) serves as a coordination point for ATP. Tyrosine 86 lines the L-citrulline pocket. Glycine 116 is a binding site for ATP. Residues threonine 118, asparagine 122, and aspartate 123 each contribute to the L-aspartate site. Asparagine 122 contributes to the L-citrulline binding site. L-citrulline contacts are provided by arginine 126, serine 174, serine 183, glutamate 259, and tyrosine 271.

The protein belongs to the argininosuccinate synthase family. Type 1 subfamily. As to quaternary structure, homotetramer.

The protein localises to the cytoplasm. It carries out the reaction L-citrulline + L-aspartate + ATP = 2-(N(omega)-L-arginino)succinate + AMP + diphosphate + H(+). The protein operates within amino-acid biosynthesis; L-arginine biosynthesis; L-arginine from L-ornithine and carbamoyl phosphate: step 2/3. This chain is Argininosuccinate synthase, found in Bacillus anthracis (strain A0248).